A 428-amino-acid chain; its full sequence is Glutamyl-tRNA reductase (428 aa).

Residues 49-52, S109, 114-116, and Q120 each bind substrate; these read TCNR and EGQ. Residue C50 is the Nucleophile of the active site. 189-194 contributes to the NADP(+) binding site; the sequence is GAGKMS.

This sequence belongs to the glutamyl-tRNA reductase family. As to quaternary structure, homodimer.

It catalyses the reaction (S)-4-amino-5-oxopentanoate + tRNA(Glu) + NADP(+) = L-glutamyl-tRNA(Glu) + NADPH + H(+). It functions in the pathway porphyrin-containing compound metabolism; protoporphyrin-IX biosynthesis; 5-aminolevulinate from L-glutamyl-tRNA(Glu): step 1/2. The protein operates within porphyrin-containing compound metabolism; chlorophyll biosynthesis. Functionally, catalyzes the NADPH-dependent reduction of glutamyl-tRNA(Glu) to glutamate 1-semialdehyde (GSA). The chain is Glutamyl-tRNA reductase from Gloeothece citriformis (strain PCC 7424) (Cyanothece sp. (strain PCC 7424)).